The sequence spans 4513 residues: Dynein-1-beta heavy chain, flagellar inner arm I1 complex (4513 aa).

Residues 1 to 1806 (MEPGDEGKGH…IVKQVLSVFY (1806 aa)) are stem. 3 coiled-coil regions span residues 192–223 (KAAAKQKDLVQRLESTIIHWTRQVKELLNQQD), 1544–1577 (TAQGLLESFQDMNNKLERIQKSLDNYLENKRQQF), and 1704–1727 (THECEKALADADSARKNLKLLKKK). AAA regions lie at residues 1807–2028 (YGYE…PIAR), 2089–2350 (RAIE…VPEN), 2458–2706 (FKPA…IIQG), and 2808–3059 (DYAL…LKRR). ATP-binding positions include 1845–1852 (GPAGTGKT), 2127–2134 (GRTGSGKS), 2497–2504 (GNVGVGKT), and 2848–2855 (GVGGSGRK). Coiled coils occupy residues 3107–3193 (AAMK…LTKK), 3301–3384 (KRAK…SISE), and 3499–3519 (RLKVLNLQMSDMARQIENAIQ). The tract at residues 3107–3384 (AAMKKVAEEK…RVRWEASISE (278 aa)) is stalk. 2 AAA regions span residues 3443–3674 (LANP…EVNA) and 3890–4109 (ATTY…LLKS).

The I1 inner arm complex (also known as the f dynein complex) is a two-headed isoform composed of two heavy chains (1-alpha and 1-beta), three intermediate chains and three light chains. I1 occupies a specific position proximal to the first radial spoke and repeats every 96 nm along the length of the axoneme.

It is found in the cell projection. Its subcellular location is the cilium. It localises to the flagellum. The protein localises to the cytoplasm. The protein resides in the cytoskeleton. It is found in the flagellum axoneme. Functionally, force generating protein of eukaryotic cilia and flagella. Produces force towards the minus ends of microtubules. Dynein has ATPase activity; the force-producing power stroke is thought to occur on release of ADP. Required for assembly of the I1 inner arm complex and its targeting to the appropriate axoneme location. Also required for phototaxis. This chain is Dynein-1-beta heavy chain, flagellar inner arm I1 complex (DHC10), found in Chlamydomonas reinhardtii (Chlamydomonas smithii).